A 1025-amino-acid polypeptide reads, in one-letter code: Kinesin-like protein KIN-14P (1025 aa).

Disordered stretches follow at residues Met1–Gly87 and Tyr263–Glu286. Residues Ser15–Ser28 show a composition bias toward low complexity. Positions Val29 to Thr41 are enriched in basic and acidic residues. The segment covering Pro42–Ser53 has biased composition (low complexity). Polar residues predominate over residues Lys65–Gln75. Residues His203–Asn425 are a coiled coil. Residues Thr270–Glu286 are compositionally biased toward basic and acidic residues. One can recognise a Kinesin motor domain in the interval Asn509–Val838. Gly593–Thr600 contacts ATP. The stretch at Lys847–Gln879 forms a coiled coil. 3 disordered regions span residues Gln881–Ala926, Ala939–Asp977, and Thr994–Ala1025. Composition is skewed to polar residues over residues Ser901 to Ser913 and Ala939 to Ile948. Basic and acidic residues predominate over residues Val950–Lys962. Low complexity-rich tracts occupy residues Ser963–Arg974 and Ser998–Ser1016.

Belongs to the TRAFAC class myosin-kinesin ATPase superfamily. Kinesin family. KIN-14 subfamily.

The sequence is that of Kinesin-like protein KIN-14P from Arabidopsis thaliana (Mouse-ear cress).